A 359-amino-acid chain; its full sequence is Nicotinate-nucleotide--dimethylbenzimidazole phosphoribosyltransferase (359 aa).

The active-site Proton acceptor is the E318.

The protein belongs to the CobT family. As to quaternary structure, homodimer.

The catalysed reaction is 5,6-dimethylbenzimidazole + nicotinate beta-D-ribonucleotide = alpha-ribazole 5'-phosphate + nicotinate + H(+). Its pathway is nucleoside biosynthesis; alpha-ribazole biosynthesis; alpha-ribazole from 5,6-dimethylbenzimidazole: step 1/2. Its function is as follows. Catalyzes the synthesis of alpha-ribazole-5'-phosphate from nicotinate mononucleotide (NAMN) and 5,6-dimethylbenzimidazole (DMB). This is Nicotinate-nucleotide--dimethylbenzimidazole phosphoribosyltransferase from Escherichia coli O127:H6 (strain E2348/69 / EPEC).